Here is a 423-residue protein sequence, read N- to C-terminus: MIDPKLLRNNIEVVNAGLAKRGVQLDVQEWASLETRRKDLQSKTEKLQAERNAGAKQVGQIKKSGGDASEIMARMQAIGDEIKAAEVALSELQNEIEQKALSIPNLPDESVPAGKDENDNVEISKWGTPRQFDFEIKDHTDLGEWMGGLEFETATKLTGSRFSVLKGPLARLQRALTQFMLDTHTLKNGYTEAYVPYLVNADSLRGTGQLPKFEEDLFKLQGEKEYYLIPTAEVPVTNFVRDEIIDADRLPLKYAAHTPCFRSEAGSYGRDTRGLIRQHQFDKVEMVQIVKPETSMQALEELTAHAEGILQALGLPYRKILLCGGDMGFGATKTYDLEVWVPSQNTYREISSCSNMGDFQARRMKARYRMDQKKTELVHTLNGSGLAVGRTLLAVMENYQREDGSIEIPEVLRPYMGGATFID.

Residue 231-233 (TAE) participates in L-serine binding. An ATP-binding site is contributed by 262–264 (RSE). Glu285 is a binding site for L-serine. 349-352 (EISS) serves as a coordination point for ATP. Ser384 contacts L-serine.

It belongs to the class-II aminoacyl-tRNA synthetase family. Type-1 seryl-tRNA synthetase subfamily. As to quaternary structure, homodimer. The tRNA molecule binds across the dimer.

It localises to the cytoplasm. The catalysed reaction is tRNA(Ser) + L-serine + ATP = L-seryl-tRNA(Ser) + AMP + diphosphate + H(+). It carries out the reaction tRNA(Sec) + L-serine + ATP = L-seryl-tRNA(Sec) + AMP + diphosphate + H(+). The protein operates within aminoacyl-tRNA biosynthesis; selenocysteinyl-tRNA(Sec) biosynthesis; L-seryl-tRNA(Sec) from L-serine and tRNA(Sec): step 1/1. Catalyzes the attachment of serine to tRNA(Ser). Is also able to aminoacylate tRNA(Sec) with serine, to form the misacylated tRNA L-seryl-tRNA(Sec), which will be further converted into selenocysteinyl-tRNA(Sec). In Acinetobacter baumannii (strain AB307-0294), this protein is Serine--tRNA ligase.